A 193-amino-acid polypeptide reads, in one-letter code: Dirigent protein 11 (193 aa).

A signal peptide spans 1–33 (MLQITNMATPFLLLLLPLIFSTVLLLTITVTQS). N78 and N136 each carry an N-linked (GlcNAc...) asparagine glycan.

It belongs to the plant dirigent protein family. In terms of assembly, homodimer.

It is found in the secreted. It localises to the extracellular space. Its subcellular location is the apoplast. Its function is as follows. Dirigent proteins impart stereoselectivity on the phenoxy radical-coupling reaction, yielding optically active lignans from two molecules of coniferyl alcohol in the biosynthesis of lignans, flavonolignans, and alkaloids and thus plays a central role in plant secondary metabolism. This is Dirigent protein 11 (DIR11) from Arabidopsis thaliana (Mouse-ear cress).